Reading from the N-terminus, the 61-residue chain is Large ribosomal subunit protein eL37 (61 aa).

Residues cysteine 19, cysteine 22, cysteine 34, and cysteine 37 each contribute to the Zn(2+) site. A C4-type zinc finger spans residues 19-37; the sequence is CRRCGRNAYNVSKHYCAAC.

Belongs to the eukaryotic ribosomal protein eL37 family. It depends on Zn(2+) as a cofactor.

In terms of biological role, binds to the 23S rRNA. This Saccharolobus solfataricus (strain ATCC 35092 / DSM 1617 / JCM 11322 / P2) (Sulfolobus solfataricus) protein is Large ribosomal subunit protein eL37 (rpl37e).